Reading from the N-terminus, the 702-residue chain is 1,4-alpha-glucan-branching enzyme (702 aa).

An N-acetylalanine modification is found at Ala2. Substrate-binding positions include 62–63 and 91–93; these read NE and WAP. A (1,4-alpha-D-glucosyl)n-binding site is contributed by Trp107. 118-121 contributes to the substrate binding site; sequence EYGK. Residue Lys143 coordinates (1,4-alpha-D-glucosyl)n. Tyr173 carries the phosphotyrosine modification. A substrate-binding site is contributed by 333–336; it reads EVLR. The active-site Nucleophile is Asp357. Glu412 functions as the Proton donor in the catalytic mechanism.

Belongs to the glycosyl hydrolase 13 family. GlgB subfamily. As to quaternary structure, monomer.

It carries out the reaction Transfers a segment of a (1-&gt;4)-alpha-D-glucan chain to a primary hydroxy group in a similar glucan chain.. It participates in glycan biosynthesis; glycogen biosynthesis. Its function is as follows. Glycogen-branching enzyme participates in the glycogen biosynthetic process along with glycogenin and glycogen synthase. Generates alpha-1,6-glucosidic branches from alpha-1,4-linked glucose chains, to increase solubility of the glycogen polymer. This is 1,4-alpha-glucan-branching enzyme (Gbe1) from Mus musculus (Mouse).